We begin with the raw amino-acid sequence, 461 residues long: V-type ATP synthase beta chain (461 aa).

This sequence belongs to the ATPase alpha/beta chains family.

Its function is as follows. Produces ATP from ADP in the presence of a proton gradient across the membrane. The V-type beta chain is a regulatory subunit. The polypeptide is V-type ATP synthase beta chain (Clostridium botulinum (strain Kyoto / Type A2)).